A 702-amino-acid chain; its full sequence is Rho GTPase-activating protein 22 (702 aa).

The region spanning P43–W151 is the PH domain. The region spanning Q161 to F355 is the Rho-GAP domain. Disordered stretches follow at residues L360–P433, S438–E457, R480–T511, and P555–H596. A phosphoserine mark is found at S365 and S397. 4 stretches are compositionally biased toward polar residues: residues S407 to A421, S438 to L456, G491 to P504, and S581 to Q594. Positions Q594 to L691 form a coiled coil.

In terms of assembly, interacts with VEZF1. As to expression, predominantly present in endothelial cells (at protein level).

It localises to the cytoplasm. It is found in the nucleus. Functionally, rho GTPase-activating protein involved in the signal transduction pathway that regulates endothelial cell capillary tube formation during angiogenesis. Acts as a GTPase activator for the RAC1 by converting it to an inactive GDP-bound state. Inhibits RAC1-dependent lamellipodia formation. May also play a role in transcription regulation via its interaction with VEZF1, by regulating activity of the endothelin-1 (EDN1) promoter. This chain is Rho GTPase-activating protein 22 (Arhgap22), found in Mus musculus (Mouse).